The primary structure comprises 85 residues: uncharacterized protein (85 aa).

The residue at position 22 (Ser-22) is a Phosphoserine.

It localises to the cytoplasm. The protein localises to the nucleus. This is an uncharacterized protein from Saccharomyces cerevisiae (strain ATCC 204508 / S288c) (Baker's yeast).